The following is a 513-amino-acid chain: ATP synthase subunit alpha (513 aa).

ATP is bound at residue 171 to 178 (GDRQIGKT).

The protein belongs to the ATPase alpha/beta chains family. In terms of assembly, F-type ATPases have 2 components, CF(1) - the catalytic core - and CF(0) - the membrane proton channel. CF(1) has five subunits: alpha(3), beta(3), gamma(1), delta(1), epsilon(1). CF(0) has three main subunits: a(1), b(2) and c(9-12). The alpha and beta chains form an alternating ring which encloses part of the gamma chain. CF(1) is attached to CF(0) by a central stalk formed by the gamma and epsilon chains, while a peripheral stalk is formed by the delta and b chains.

The protein resides in the cell membrane. The enzyme catalyses ATP + H2O + 4 H(+)(in) = ADP + phosphate + 5 H(+)(out). In terms of biological role, produces ATP from ADP in the presence of a proton gradient across the membrane. The alpha chain is a regulatory subunit. The polypeptide is ATP synthase subunit alpha (Wolbachia pipientis wMel).